A 200-amino-acid chain; its full sequence is Endoribonuclease YbeY (200 aa).

The span at 1 to 18 (MPADPALPDPVPPGPTAP) shows a compositional bias: pro residues. The segment at 1–22 (MPADPALPDPVPPGPTAPVPTD) is disordered. Residues His151, His155, and His161 each contribute to the Zn(2+) site.

The protein belongs to the endoribonuclease YbeY family. The cofactor is Zn(2+).

Its subcellular location is the cytoplasm. Functionally, single strand-specific metallo-endoribonuclease involved in late-stage 70S ribosome quality control and in maturation of the 3' terminus of the 16S rRNA. This Rhodospirillum rubrum (strain ATCC 11170 / ATH 1.1.1 / DSM 467 / LMG 4362 / NCIMB 8255 / S1) protein is Endoribonuclease YbeY.